The sequence spans 228 residues: Glucose-induced degradation protein 8-A homolog (228 aa).

The LisH domain occupies Q25–P57. One can recognise a CTLH domain in the interval S63–A120.

This sequence belongs to the GID8 family. Identified in the CTLH complex that contains at least MAEA, RMND5A (or alternatively its paralog RMND5B), GID8, WDR26, and RANBP9 and/or RANBP10. Interacts with CTNNB1.

Its function is as follows. Core component of the CTLH E3 ubiquitin-protein ligase complex that selectively accepts ubiquitin from UBE2H and mediates ubiquitination and subsequent proteasomal degradation of target proteins. Acts as a positive regulator of Wnt signaling pathway by promoting beta-catenin (CTNNB1) nuclear accumulation. Required for normal Wnt signaling and normal dorsoventral patterning during embryogenesis. In Danio rerio (Zebrafish), this protein is Glucose-induced degradation protein 8-A homolog (gid8a).